We begin with the raw amino-acid sequence, 333 residues long: Nucleoid-associated protein APL_0429 (333 aa).

It belongs to the YejK family.

It is found in the cytoplasm. The protein localises to the nucleoid. The polypeptide is Nucleoid-associated protein APL_0429 (Actinobacillus pleuropneumoniae serotype 5b (strain L20)).